Reading from the N-terminus, the 279-residue chain is Alcohol dehydrogenase-related 31 kDa protein (279 aa).

Residue 11 to 34 (YVADCGGIALETSKVLMTKNIAKL) participates in NAD(+) binding. S139 contacts substrate. Residue Y152 is the Proton acceptor of the active site.

The protein belongs to the short-chain dehydrogenases/reductases (SDR) family.

The protein is Alcohol dehydrogenase-related 31 kDa protein (Adhr) of Drosophila madeirensis (Fruit fly).